Here is a 512-residue protein sequence, read N- to C-terminus: MNALIGQLLNAPVALLKGATIALSFFSLYLFGLVIYRLIFHPLAQYPGPLLGRITNLYAAYHAWKGDIHEDIWRCHQKHGNCIRYAPDRLAFDTAKAVSDIYGYGGNVRKSQVYDTLVHRTANTLTMRDKKQHAQRRRIMSHGFSDAAIRSFEPRVQELIQTLCDLLIVKDASADSEWSAPQDMAPWFDYLTFDIMSSLIFSASYDTLRQEKYRSVIRAIEESNVRVSVLLQAPIVTLFRSDKKLFSQSILGRNHFTRFIGSTVKERVQKSKLLADRDIFSYFQSSKAAANGDSMNMNELSGEAATLIVAGSDTTATTLAATMFYLSQSADIYHRVAQEVRQCFNSEDEIHAGSQLNACRLLRACIDEALRMSPPAGSALWREVEAGGITVNGRFVPEGYDVGVGIYAVHHNPTVYPQPFRFDPDRWLVDDTHDVRSAFMPFSLGTRSCIGKGLAQMEALLTLANIIWRYDFRAVPGGAVQPEYKLKDHVTGAKTGPVLQYRRIVRDKIMIG.

The chain crosses the membrane as a helical span at residues 15-35; sequence LLKGATIALSFFSLYLFGLVI. C449 serves as a coordination point for heme.

The protein belongs to the cytochrome P450 family. The cofactor is heme.

Its subcellular location is the membrane. The protein operates within secondary metabolite biosynthesis. Cytochrome P450 monooxygenase; part of the gene cluster that mediates the biosynthesis of oxaleimides, cytotoxic compounds containing an unusual disubstituted succinimide moiety. The first step of the pathway is provided by the HR-PKS poxF that serves in a new mode of collaborative biosynthesis with the PKS-NRPS poxE, by providing the olefin containing amino acid substrate via the synthesis of an ACP-bound dec-4-enoate. The cytochrome P450 monooxygenase poxM-catalyzed oxidation at the alpha-position creates the enzyme-bound 2-hydroxydec-4-enoyl-ACP thioester, which may be prone to spontaneous hydrolysis to yield 2-hydroxydec-4-enoic acid due to increased electrophilicity of the carbonyl. 2-hydroxydec-4-enoic acid can then be further oxidized by poxM to yield the alpha-ketoacid 2-oxodec-4-enoicacid, which is reductively aminated by the aminotransferase poxL to yield (S,E)-2-aminodec-4-enoic acid. The Hybrid PKS-NRPS synthetase poxE then performs condensation between the octaketide product of its PKS modules and the amino group of (S,E)-2-aminodec-4-enoic acid which is activated and incorporated by the adenylation domain. The resulting aminoacyl product can be cyclized by the Diels-Alderase PoxQ and reductively released by the reductive (R) domain of poxE to yield an aldehyde intermediate. The released aldehyde is then substrate for a Knoevenagel condensation by the hydrolyase poxO followed by an oxidation at the 5-position of the pyrrolidone ring. The presence of the olefin from the amino acid building block allows for migration of the substituted allyl group to occur. This allylic transposition reaction takes place in a conjugate addition, semipinacol-like fashion to yield a succinimide intermediate. Iterative two-electron oxidations of the C7 methyl of the succinimide intermediate to the carboxylic acid can be catalyzed by one of two remaining cytochrome P450 monooxygenasess poxC or poxD to yield oxaleimide A. Subsequent oxidation yields the maleimide scaffold oxaleimide I. Both oxaleimide A and oxaleimide I can undergo oxidative modifications in the decalin ring to yield the series of products oxaleimides B to H. The sequence is that of Cytochrome P450 monooxygenase poxM from Penicillium oxalicum (strain 114-2 / CGMCC 5302) (Penicillium decumbens).